A 148-amino-acid chain; its full sequence is Snaclec B4 (148 aa).

Residues 1–24 (MGRIIFVSFGLLVVFLSLSGTGAA) form the signal peptide. Disulfide bonds link C27/C38, C55/C144, and C121/C136. Positions 34-145 (YDQHCYKVFD…CRLLGHFVCK (112 aa)) constitute a C-type lectin domain.

The protein belongs to the snaclec family. As to quaternary structure, heterodimer; disulfide-linked. In terms of tissue distribution, expressed by the venom gland.

It localises to the secreted. In terms of biological role, interferes with one step of hemostasis (modulation of platelet aggregation, or coagulation cascade, for example). This Macrovipera lebetinus (Levantine viper) protein is Snaclec B4.